The sequence spans 244 residues: MKHFTFADNYLRTYIDTVTFGFKFIVHPVNYTDLSISIMIGEQNLFNLVKLIPNVRKLHLYFTDENTKYNLESITKLTKLRVLVVFSQFEKKSRPRLYNIKSLNKLKLDSIVIYDKILDPFNPVYQWPQIRDRKFKLVKSIDIKGPIINYNVNRIRFHNHLFEKYPVCCSNFIVQLINQPDNTQIYQVIYRYQEQYIEDQIYIQTIDKSKFLRFIYGENVLNTEIYYPQCQQDLYIDDIDNNSN.

The polypeptide is Robin (Acanthamoeba polyphaga (Amoeba)).